Consider the following 1404-residue polypeptide: DNA-directed RNA polymerase subunit beta' (1404 aa).

Residues cysteine 70, cysteine 72, cysteine 85, and cysteine 88 each contribute to the Zn(2+) site. Mg(2+) contacts are provided by aspartate 460, aspartate 462, and aspartate 464. Residues cysteine 814, cysteine 889, cysteine 896, and cysteine 899 each contribute to the Zn(2+) site. The tract at residues 1377–1404 (DSEMETLSGKPAAAEPVAAVADAGADEE) is disordered. Positions 1387 to 1404 (PAAAEPVAAVADAGADEE) are enriched in low complexity.

It belongs to the RNA polymerase beta' chain family. As to quaternary structure, the RNAP catalytic core consists of 2 alpha, 1 beta, 1 beta' and 1 omega subunit. When a sigma factor is associated with the core the holoenzyme is formed, which can initiate transcription. It depends on Mg(2+) as a cofactor. Requires Zn(2+) as cofactor.

It carries out the reaction RNA(n) + a ribonucleoside 5'-triphosphate = RNA(n+1) + diphosphate. DNA-dependent RNA polymerase catalyzes the transcription of DNA into RNA using the four ribonucleoside triphosphates as substrates. The protein is DNA-directed RNA polymerase subunit beta' of Xanthomonas euvesicatoria pv. vesicatoria (strain 85-10) (Xanthomonas campestris pv. vesicatoria).